The following is a 57-amino-acid chain: Phosphatase RapH inhibitor (57 aa).

2 consecutive propeptides follow at residues 1–34 (MPIKKKVMMCLAVTLVFGSMSFPTLTNSGGFKES) and 41–57 (YIDHSPYKLSDQKKALS). A disordered region spans residues 26 to 57 (TNSGGFKESTDRNTTYIDHSPYKLSDQKKALS).

The protein belongs to the Phr family. Contains a predicted signal peptide cleavage site in the N-terminal region, however the propeptide is probably only subject to processing events at the ends of the mature peptide.

Its subcellular location is the secreted. The protein localises to the cytoplasm. Signaling molecule involved the regulation of both sporulation and competence. Secreted during production, but the mature peptide acts intracellularly, indicating that it needs to be imported into the cell to function. Acts by inhibiting RapH activity. Can inhibit both RapH activities, the dephosphorylation of Spo0F and the sequestration of ComA. The chain is Phosphatase RapH inhibitor (phrH) from Bacillus subtilis (strain 168).